Reading from the N-terminus, the 362-residue chain is Dihydroorotate dehydrogenase (quinone) (362 aa).

Residues 62–66 (AGYDK) and Thr-86 each bind FMN. Substrate is bound at residue Lys-66. 111–115 (NRLGF) is a binding site for substrate. The FMN site is built by Asn-139 and Asn-170. Residue Asn-170 coordinates substrate. Ser-173 (nucleophile) is an active-site residue. Asn-175 provides a ligand contact to substrate. 2 residues coordinate FMN: Lys-215 and Ser-243. A substrate-binding site is contributed by 244 to 245 (NT). FMN is bound by residues Gly-266, Gly-295, and 316–317 (YS).

This sequence belongs to the dihydroorotate dehydrogenase family. Type 2 subfamily. Monomer. The cofactor is FMN.

It localises to the cell membrane. The catalysed reaction is (S)-dihydroorotate + a quinone = orotate + a quinol. Its pathway is pyrimidine metabolism; UMP biosynthesis via de novo pathway; orotate from (S)-dihydroorotate (quinone route): step 1/1. Functionally, catalyzes the conversion of dihydroorotate to orotate with quinone as electron acceptor. This Sinorhizobium fredii (strain NBRC 101917 / NGR234) protein is Dihydroorotate dehydrogenase (quinone).